Here is a 508-residue protein sequence, read N- to C-terminus: Probable monogalactosyldiacylglycerol synthase 3, chloroplastic (508 aa).

The transit peptide at 1–60 directs the protein to the chloroplast; sequence MAASSSSSSSMASPRGRSIRETVLETVAAYHQQQRMRRKFRKSLSYAGELSSAGRARGEG. Residues 51–79 form a disordered region; that stretch reads SSAGRARGEGGASSSASTTSLCGPDEDDE.

This sequence belongs to the glycosyltransferase 28 family.

It is found in the plastid. It localises to the chloroplast membrane. The enzyme catalyses a 1,2-diacyl-sn-glycerol + UDP-alpha-D-galactose = a 1,2-diacyl-3-O-(beta-D-galactosyl)-sn-glycerol + UDP + H(+). Its function is as follows. Involved in the synthesis of the major structural component of photosynthetic membranes. The chain is Probable monogalactosyldiacylglycerol synthase 3, chloroplastic (MGD3) from Oryza sativa subsp. japonica (Rice).